Reading from the N-terminus, the 138-residue chain is ATP synthase epsilon chain (138 aa).

The protein belongs to the ATPase epsilon chain family. As to quaternary structure, F-type ATPases have 2 components, CF(1) - the catalytic core - and CF(0) - the membrane proton channel. CF(1) has five subunits: alpha(3), beta(3), gamma(1), delta(1), epsilon(1). CF(0) has three main subunits: a, b and c.

It is found in the cell membrane. Produces ATP from ADP in the presence of a proton gradient across the membrane. The protein is ATP synthase epsilon chain of Polynucleobacter asymbioticus (strain DSM 18221 / CIP 109841 / QLW-P1DMWA-1) (Polynucleobacter necessarius subsp. asymbioticus).